The primary structure comprises 195 residues: Probable nicotinate-nucleotide adenylyltransferase (195 aa).

Belongs to the NadD family.

The enzyme catalyses nicotinate beta-D-ribonucleotide + ATP + H(+) = deamido-NAD(+) + diphosphate. It participates in cofactor biosynthesis; NAD(+) biosynthesis; deamido-NAD(+) from nicotinate D-ribonucleotide: step 1/1. Its function is as follows. Catalyzes the reversible adenylation of nicotinate mononucleotide (NaMN) to nicotinic acid adenine dinucleotide (NaAD). This is Probable nicotinate-nucleotide adenylyltransferase from Opitutus terrae (strain DSM 11246 / JCM 15787 / PB90-1).